Reading from the N-terminus, the 96-residue chain is Co-chaperonin GroES (96 aa).

It belongs to the GroES chaperonin family. In terms of assembly, heptamer of 7 subunits arranged in a ring. Interacts with the chaperonin GroEL.

It localises to the cytoplasm. Its function is as follows. Together with the chaperonin GroEL, plays an essential role in assisting protein folding. The GroEL-GroES system forms a nano-cage that allows encapsulation of the non-native substrate proteins and provides a physical environment optimized to promote and accelerate protein folding. GroES binds to the apical surface of the GroEL ring, thereby capping the opening of the GroEL channel. In Methylobacterium radiotolerans (strain ATCC 27329 / DSM 1819 / JCM 2831 / NBRC 15690 / NCIMB 10815 / 0-1), this protein is Co-chaperonin GroES.